The chain runs to 241 residues: Large ribosomal subunit protein uL30 (241 aa).

The tract at residues 1–32 is disordered; the sequence is MATTLKPETLQKKEKAQQKTAEERAAAKKVRK. Over residues 9–26 the composition is skewed to basic and acidic residues; the sequence is TLQKKEKAQQKTAEERAA.

Belongs to the universal ribosomal protein uL30 family. In terms of assembly, component of the large ribosomal subunit. Mature ribosomes consist of a small (40S) and a large (60S) subunit. The 40S subunit contains about 32 different proteins and 1 molecule of RNA (18S). The 60S subunit contains 45 different proteins and 3 molecules of RNA (25S, 5.8S and 5S).

The protein resides in the cytoplasm. In terms of biological role, component of the ribosome, a large ribonucleoprotein complex responsible for the synthesis of proteins in the cell. The small ribosomal subunit (SSU) binds messenger RNAs (mRNAs) and translates the encoded message by selecting cognate aminoacyl-transfer RNA (tRNA) molecules. The large subunit (LSU) contains the ribosomal catalytic site termed the peptidyl transferase center (PTC), which catalyzes the formation of peptide bonds, thereby polymerizing the amino acids delivered by tRNAs into a polypeptide chain. The nascent polypeptides leave the ribosome through a tunnel in the LSU and interact with protein factors that function in enzymatic processing, targeting, and the membrane insertion of nascent chains at the exit of the ribosomal tunnel. In Candida albicans (strain SC5314 / ATCC MYA-2876) (Yeast), this protein is Large ribosomal subunit protein uL30.